Reading from the N-terminus, the 334-residue chain is Putative 2-hydroxyacid dehydrogenase UNK4.10 (334 aa).

NAD(+) is bound by residues 166–167 (GI), 244–246 (TAR), and Asp-270. Residue Arg-246 is part of the active site. Glu-275 is an active-site residue. The Proton donor role is filled by His-293. NAD(+) is bound at residue 293–296 (HLGT).

Belongs to the D-isomer specific 2-hydroxyacid dehydrogenase family.

The chain is Putative 2-hydroxyacid dehydrogenase UNK4.10 from Schizosaccharomyces pombe (strain 972 / ATCC 24843) (Fission yeast).